The chain runs to 280 residues: Energy-coupling factor transporter ATP-binding protein EcfA1 (280 aa).

The 236-residue stretch at 6 to 241 (LRTENISFQY…SHMLQEIGLD (236 aa)) folds into the ABC transporter domain. 40 to 47 (GQNGSGKS) contributes to the ATP binding site.

Belongs to the ABC transporter superfamily. Energy-coupling factor EcfA family. Forms a stable energy-coupling factor (ECF) transporter complex composed of 2 membrane-embedded substrate-binding proteins (S component), 2 ATP-binding proteins (A component) and 2 transmembrane proteins (T component).

The protein localises to the cell membrane. In terms of biological role, ATP-binding (A) component of a common energy-coupling factor (ECF) ABC-transporter complex. Unlike classic ABC transporters this ECF transporter provides the energy necessary to transport a number of different substrates. The sequence is that of Energy-coupling factor transporter ATP-binding protein EcfA1 from Bacillus thuringiensis subsp. konkukian (strain 97-27).